We begin with the raw amino-acid sequence, 340 residues long: HTH-type transcriptional regulator VirS (340 aa).

Positions 236 to 334 (ERVVGLARRL…GMTPRQYRAY (99 aa)) constitute an HTH araC/xylS-type domain. 2 consecutive DNA-binding regions (H-T-H motif) follow at residues 254 to 275 (EAIADQLDMHPRTLQRRLAAEG) and 301 to 324 (LSQIAVLLGYSEQSALNRSCRRWF).

In terms of processing, phosphorylated by PknK. Phosphorylation increases affinity for the mymA promoter.

Functionally, regulates the expression of the mymA operon. The protein is HTH-type transcriptional regulator VirS (virS) of Mycobacterium tuberculosis (strain CDC 1551 / Oshkosh).